We begin with the raw amino-acid sequence, 610 residues long: Zinc metalloproteinase-disintegrin-like brevilysin H6 (610 aa).

Positions 1-20 (MIQVLLVTICLAAFPYQGSS) are cleaved as a signal peptide. A propeptide spanning residues 21–191 (IILESGNVND…ASQLNLTPEQ (171 aa)) is cleaved from the precursor. Q192 is subject to Pyrrolidone carboxylic acid. Positions 198–394 (RFVELVLVAD…HNPECIVNEP (197 aa)) constitute a Peptidase M12B domain. Ca(2+) contacts are provided by E201 and D285. 4 cysteine pairs are disulfide-bonded: C309-C389, C349-C373, C351-C356, and C373-C378. H334 serves as a coordination point for Zn(2+). E335 is an active-site residue. Zn(2+)-binding residues include H338 and H344. Residue N372 is glycosylated (N-linked (GlcNAc...) asparagine). Ca(2+) contacts are provided by C389, N392, V404, N407, L409, E411, E414, and D417. Residues 402-488 (PPVCGNELLE…ECPADVFHKN (87 aa)) enclose the Disintegrin domain. 22 disulfides stabilise this stretch: C405–C424, C405–C434, C416–C429, C416–C434, C418–C424, C428–C451, C442–C448, C447–C473, C460–C480, C467–C492, C467–C499, C492–C504, C499–C504, C511–C526, C511–C561, C526–C572, C539–C549, C549–C556, C556–C598, C561–C572, C592–C603, and C598–C603. A D/ECD-tripeptide motif is present at residues 466–468 (ECD). Ca(2+) is bound by residues D468, P469, E471, D483, and V484.

Belongs to the venom metalloproteinase (M12B) family. P-III subfamily. P-IIIb sub-subfamily. In terms of assembly, monomer. Zn(2+) serves as cofactor. In the absence of calcium ions, is autocatalytically degraded giving 29 (p29K) and 45 kDa (p45K) fragments. In presence of calcium ions, the p45K is not detected. In terms of tissue distribution, expressed by the venom gland.

Its subcellular location is the secreted. Inhibited by chelating agents. Calcium ions enhance its activity, they also suppress autoproteolysis, and contribute to the stability of the enzyme against pH, heating, urea and cysteine. Shows weak hemorrhagic activity. Rapidly degrades the alpha-chain of fibrinogen (FGA). In Gloydius brevicauda (Korean slamosa snake), this protein is Zinc metalloproteinase-disintegrin-like brevilysin H6.